The following is a 387-amino-acid chain: Alkanesulfonate monooxygenase (387 aa).

Belongs to the SsuD family.

It carries out the reaction an alkanesulfonate + FMNH2 + O2 = an aldehyde + FMN + sulfite + H2O + 2 H(+). Its function is as follows. Catalyzes the desulfonation of aliphatic sulfonates. This Cupriavidus necator (strain ATCC 17699 / DSM 428 / KCTC 22496 / NCIMB 10442 / H16 / Stanier 337) (Ralstonia eutropha) protein is Alkanesulfonate monooxygenase.